Consider the following 353-residue polypeptide: Peptide chain release factor 1 (353 aa).

Gln230 is subject to N5-methylglutamine.

Belongs to the prokaryotic/mitochondrial release factor family. In terms of processing, methylated by PrmC. Methylation increases the termination efficiency of RF1.

It localises to the cytoplasm. Peptide chain release factor 1 directs the termination of translation in response to the peptide chain termination codons UAG and UAA. The protein is Peptide chain release factor 1 of Leptospira biflexa serovar Patoc (strain Patoc 1 / ATCC 23582 / Paris).